The primary structure comprises 397 residues: Acetate kinase (397 aa).

Mg(2+) is bound at residue Asn7. Lys14 contributes to the ATP binding site. Residue Arg91 coordinates substrate. Asp148 acts as the Proton donor/acceptor in catalysis. ATP contacts are provided by residues 208–212, 283–285, and 331–335; these read HLGNG, DFR, and GLGEN. Glu383 contributes to the Mg(2+) binding site.

Belongs to the acetokinase family. As to quaternary structure, homodimer. Requires Mg(2+) as cofactor. The cofactor is Mn(2+).

It is found in the cytoplasm. The catalysed reaction is acetate + ATP = acetyl phosphate + ADP. Its pathway is metabolic intermediate biosynthesis; acetyl-CoA biosynthesis; acetyl-CoA from acetate: step 1/2. Catalyzes the formation of acetyl phosphate from acetate and ATP. Can also catalyze the reverse reaction. This chain is Acetate kinase, found in Heliobacterium modesticaldum (strain ATCC 51547 / Ice1).